Reading from the N-terminus, the 101-residue chain is Urease subunit beta (101 aa).

The protein belongs to the urease beta subunit family. In terms of assembly, heterotrimer of UreA (gamma), UreB (beta) and UreC (alpha) subunits. Three heterotrimers associate to form the active enzyme.

The protein localises to the cytoplasm. It carries out the reaction urea + 2 H2O + H(+) = hydrogencarbonate + 2 NH4(+). Its pathway is nitrogen metabolism; urea degradation; CO(2) and NH(3) from urea (urease route): step 1/1. This is Urease subunit beta from Cereibacter sphaeroides (strain ATCC 17029 / ATH 2.4.9) (Rhodobacter sphaeroides).